The primary structure comprises 738 residues: Flagellar radial spoke protein 2 (738 aa).

The residue at position 104 (arginine 104) is an Asymmetric dimethylarginine. Acidic residues-rich tracts occupy residues proline 134–alanine 153 and glutamate 161–glycine 182. The segment at proline 134–isoleucine 189 is disordered. Arginine 260 carries the asymmetric dimethylarginine modification. The interval alanine 357–valine 426 is disordered. A compositionally biased stretch (acidic residues) spans glutamate 371–glutamate 415. 3 positions are modified to asymmetric dimethylarginine: arginine 453, arginine 538, and arginine 615. A disordered region spans residues alanine 674–glutamate 738. Over residues proline 689–serine 730 the composition is skewed to low complexity.

This sequence belongs to the dpy-30 family. Post-translationally, asymmetrically dimethylated at Arg-104, Arg-260, Arg-453, Arg-538 and Arg-615 during flagellum resorption. Probably methylated by PRMT1.

The protein resides in the cytoplasm. The protein localises to the cytoskeleton. Its subcellular location is the flagellum axoneme. Its function is as follows. Flagellar radial spokes contribute to the regulation of dynein arm activity and thus the pattern of flagellar bending. They consist of a thin stalk, which is attached to the a subfiber of the outer doublet microtubule, and a bulbous head, which is attached to the stalk and appears to interact with the projections from the central pair of microtubules. Binds calmodulin in a calcium-dependent manner. This Chlamydomonas reinhardtii (Chlamydomonas smithii) protein is Flagellar radial spoke protein 2.